The chain runs to 174 residues: NADH-quinone oxidoreductase subunit B (174 aa).

Residues cysteine 53, cysteine 54, cysteine 118, and cysteine 148 each contribute to the [4Fe-4S] cluster site.

It belongs to the complex I 20 kDa subunit family. In terms of assembly, NDH-1 is composed of 14 different subunits. Subunits NuoB, C, D, E, F, and G constitute the peripheral sector of the complex. Requires [4Fe-4S] cluster as cofactor.

It localises to the cell inner membrane. The catalysed reaction is a quinone + NADH + 5 H(+)(in) = a quinol + NAD(+) + 4 H(+)(out). Functionally, NDH-1 shuttles electrons from NADH, via FMN and iron-sulfur (Fe-S) centers, to quinones in the respiratory chain. Couples the redox reaction to proton translocation (for every two electrons transferred, four hydrogen ions are translocated across the cytoplasmic membrane), and thus conserves the redox energy in a proton gradient. This Ruegeria sp. (strain TM1040) (Silicibacter sp.) protein is NADH-quinone oxidoreductase subunit B.